Reading from the N-terminus, the 193-residue chain is 3-isopropylmalate dehydratase small subunit (193 aa).

This sequence belongs to the LeuD family. LeuD type 1 subfamily. Heterodimer of LeuC and LeuD.

The enzyme catalyses (2R,3S)-3-isopropylmalate = (2S)-2-isopropylmalate. The protein operates within amino-acid biosynthesis; L-leucine biosynthesis; L-leucine from 3-methyl-2-oxobutanoate: step 2/4. In terms of biological role, catalyzes the isomerization between 2-isopropylmalate and 3-isopropylmalate, via the formation of 2-isopropylmaleate. The polypeptide is 3-isopropylmalate dehydratase small subunit (Bacillus cereus (strain B4264)).